The following is a 357-amino-acid chain: MSLTRLLIRDFRNIETADLALSPGFNFLVGANGSGKTSVLEAIYTLGHGRAFRSLQIGRVIRHEQEAFVLHGRLQGEERETAIGLTKDKQGDSKVRIDGTDGHKVAELAHLMPMQLITPEGFTLLNGGPKYRRAFLDWGCFHNEPGFFTAWSNLKRLLKQRNAALRQVTRYEQLRPWDKELIPLAEQISTWRAEYSGGIAADMADTCKQFLPEFSLTFSFQRGWEKETEYAEVLERNFERDRQLTYTAHGPHKADLRIRADGAPVEDTLSRGQLKLLMCALRLAQGEFLTRESGRRCLYLIDDFASELDDERRGLLASRLKATQSQVFVSAISAEHVIDMSDENSKMFTVEKGKITD.

G30 to T37 lines the ATP pocket.

The protein belongs to the RecF family.

The protein resides in the cytoplasm. Functionally, the RecF protein is involved in DNA metabolism; it is required for DNA replication and normal SOS inducibility. RecF binds preferentially to single-stranded, linear DNA. It also seems to bind ATP. The protein is DNA replication and repair protein RecF of Escherichia coli O6:K15:H31 (strain 536 / UPEC).